Consider the following 982-residue polypeptide: Chromosome partition protein Smc (982 aa).

33-40 (PNGSGKSN) contributes to the ATP binding site. Coiled-coil stretches lie at residues 171–231 (RYTK…ELAV), 280–310 (SADMQSNELQKELQDIYQKINELEQRKVIID), and 337–377 (QTQL…QIEK). The 120-residue stretch at 416–535 (TGILNTLGTF…AKDLNSAINL (120 aa)) folds into the SMC hinge domain. Coiled coils occupy residues 575–718 (SASL…SARE) and 753–822 (VKLS…IASN).

It belongs to the SMC family. Homodimer.

It localises to the cytoplasm. Its function is as follows. Required for chromosome condensation and partitioning. The sequence is that of Chromosome partition protein Smc from Mycoplasma genitalium (strain ATCC 33530 / DSM 19775 / NCTC 10195 / G37) (Mycoplasmoides genitalium).